The chain runs to 114 residues: Fluoride-specific ion channel FluC 1 (114 aa).

3 helical membrane passes run 28–48 (VFPW…GFLH), 56–76 (ILLL…TFQV), and 91–111 (IIYL…GSWL). 2 residues coordinate Na(+): glycine 66 and threonine 69.

It belongs to the fluoride channel Fluc/FEX (TC 1.A.43) family.

It is found in the cell membrane. It catalyses the reaction fluoride(in) = fluoride(out). Na(+) is not transported, but it plays an essential structural role and its presence is essential for fluoride channel function. Its function is as follows. Fluoride-specific ion channel. Important for reducing fluoride concentration in the cell, thus reducing its toxicity. The sequence is that of Fluoride-specific ion channel FluC 1 from Ligilactobacillus salivarius (strain UCC118) (Lactobacillus salivarius).